The sequence spans 304 residues: Ribosomal RNA small subunit methyltransferase H (304 aa).

Residues 37-39 (GGH), aspartate 57, phenylalanine 85, aspartate 100, and histidine 107 each bind S-adenosyl-L-methionine.

It belongs to the methyltransferase superfamily. RsmH family.

The protein localises to the cytoplasm. It carries out the reaction cytidine(1402) in 16S rRNA + S-adenosyl-L-methionine = N(4)-methylcytidine(1402) in 16S rRNA + S-adenosyl-L-homocysteine + H(+). Its function is as follows. Specifically methylates the N4 position of cytidine in position 1402 (C1402) of 16S rRNA. The chain is Ribosomal RNA small subunit methyltransferase H from Azobacteroides pseudotrichonymphae genomovar. CFP2.